Reading from the N-terminus, the 671-residue chain is Sodium, potassium, lithium and rubidium/H(+) antiporter (671 aa).

11 consecutive transmembrane segments (helical) span residues 7–29 (VLVL…FIPV), 46–66 (GLHI…PLLF), 83–103 (PILL…GYTI), 110–130 (IPLP…VVAV), 156–176 (ASGL…AFSI), 182–202 (SFVL…FFII), 228–248 (FVIY…VVAG), 276–296 (IILF…IPDV), 315–335 (ILII…LFWA), 364–384 (GAVT…GSPF), and 389–409 (LIIF…SVLL).

It belongs to the monovalent cation:proton antiporter 1 (CPA1) transporter (TC 2.A.36) family. Nhak (TC 2.A.36.3.2) subfamily.

The protein localises to the cell membrane. Its function is as follows. Transporter involved in the efflux of sodium, potassium, lithium and rubidium. The chain is Sodium, potassium, lithium and rubidium/H(+) antiporter (nhaK) from Bacillus pumilus (strain SAFR-032).